Consider the following 52-residue polypeptide: Conotoxin Ac4.3a (52 aa).

Positions 1-11 (SDFRNAAVHER) are excised as a propeptide. A Pyrrolidone carboxylic acid modification is found at Gln12. Glu14 carries the 4-carboxyglutamate modification. Residues Thr18 and Thr20 are each glycosylated (O-linked (HexNAc...) threonine). 4-hydroxyproline occurs at positions 28, 33, and 47. Pro47 carries the proline amide modification. A propeptide spanning residues 48-52 (GRRND) is cleaved from the precursor.

The protein belongs to the conotoxin A superfamily. Post-translationally, contains 3 disulfide bonds. Expressed by the venom duct.

The protein resides in the secreted. In terms of biological role, probable neurotoxin with ion channel inhibitor activity. This Conus achatinus (Little frog cone) protein is Conotoxin Ac4.3a.